A 184-amino-acid chain; its full sequence is Peptide deformylase (184 aa).

Residues C92 and H134 each coordinate Fe cation. Residue E135 is part of the active site. Residue H138 participates in Fe cation binding.

It belongs to the polypeptide deformylase family. It depends on Fe(2+) as a cofactor.

The enzyme catalyses N-terminal N-formyl-L-methionyl-[peptide] + H2O = N-terminal L-methionyl-[peptide] + formate. Functionally, removes the formyl group from the N-terminal Met of newly synthesized proteins. Requires at least a dipeptide for an efficient rate of reaction. N-terminal L-methionine is a prerequisite for activity but the enzyme has broad specificity at other positions. The polypeptide is Peptide deformylase (Psychrobacter cryohalolentis (strain ATCC BAA-1226 / DSM 17306 / VKM B-2378 / K5)).